A 295-amino-acid chain; its full sequence is Release factor glutamine methyltransferase (295 aa).

S-adenosyl-L-methionine-binding positions include Gly-127 to Gly-131, Asp-150, Phe-179, and Asn-195. Substrate is bound at residue Asn-195 to Tyr-198.

Belongs to the protein N5-glutamine methyltransferase family. PrmC subfamily.

It catalyses the reaction L-glutaminyl-[peptide chain release factor] + S-adenosyl-L-methionine = N(5)-methyl-L-glutaminyl-[peptide chain release factor] + S-adenosyl-L-homocysteine + H(+). In terms of biological role, methylates the class 1 translation termination release factors RF1/PrfA and RF2/PrfB on the glutamine residue of the universally conserved GGQ motif. The chain is Release factor glutamine methyltransferase from Nitratidesulfovibrio vulgaris (strain ATCC 29579 / DSM 644 / CCUG 34227 / NCIMB 8303 / VKM B-1760 / Hildenborough) (Desulfovibrio vulgaris).